A 366-amino-acid polypeptide reads, in one-letter code: Aldo-keto reductase AFTS1 (366 aa).

Position 75 (Asp75) interacts with NADP(+). Residue Tyr80 is the Proton donor of the active site. Residue His172 coordinates substrate. Residues Ser202–Ser203, Gln228, Gly257–Pro267, and Ser329–Ala337 each bind NADP(+).

The protein belongs to the aldo/keto reductase family.

Its pathway is mycotoxin biosynthesis. Its function is as follows. Aldo-keto reductase; part of the gene clusters that mediate the biosynthesis of the host-selective toxins (HSTs) AF-toxins responsible for Alternaria black spot of strawberry disease by the strawberry pathotype. AF-toxin I and III are valine derivatives of 2,3-dyhydroxy-isovaleric acid and 2-hydroxy-isovaleric acid respectively, while AF II is an isoleucine derivative of 2-hydroxy-valeric acid. These derivatives are bound to a 9,10-epoxy-8-hydroxy-9-methyl-decatrienoic acid (EDA) moiety. On cellular level, AF-toxins affect plasma membrane of susceptible cells and cause a sudden increase in loss of K(+) after a few minutes of toxin treatment. The aldo-keto reductase AFTS1 catalyzes the conversion of 2-keto-isovaleric acid (2-KIV) to 2-hydroxy-isovaleric acid (2-HIV) by reduction of its ketone to an alcohol. The acyl-CoA ligase AFT1, the hydrolase AFT2 and the enoyl-CoA hydratases AFT3 and AFT6, but also the polyketide synthase AFT9, the acyl-CoA dehydrogenase AFT10, the cytochrome P450 monooxygenase AFT11 and the oxidoreductase AFT12 are all involved in the biosynthesis of the AK-, AF- and ACT-toxin common EDA structural moiety. The exact function of each enzyme, and of additional enzymes identified within the AF-toxin clusters have still to be determined. In Alternaria alternata (Alternaria rot fungus), this protein is Aldo-keto reductase AFTS1.